Consider the following 277-residue polypeptide: Orotidine 5'-phosphate decarboxylase (277 aa).

Residues Asp-40, 62–64, 93–102, Tyr-229, and Arg-247 each bind substrate; these read KTH and DRKFIDIGNT. Lys-95 acts as the Proton donor in catalysis.

This sequence belongs to the OMP decarboxylase family.

The enzyme catalyses orotidine 5'-phosphate + H(+) = UMP + CO2. It participates in pyrimidine metabolism; UMP biosynthesis via de novo pathway; UMP from orotate: step 2/2. The chain is Orotidine 5'-phosphate decarboxylase (pyrG) from Aspergillus awamori (Black koji mold).